Consider the following 149-residue polypeptide: Glycine cleavage system H protein (149 aa).

Residues 23–104 (LIWVGISNHA…PYGIWLFKIN (82 aa)) form the Lipoyl-binding domain. Lysine 64 bears the N6-lipoyllysine mark.

Belongs to the GcvH family. The glycine cleavage system is composed of four proteins: P, T, L and H. The cofactor is (R)-lipoate.

In terms of biological role, the glycine cleavage system catalyzes the degradation of glycine. The H protein shuttles the methylamine group of glycine from the P protein to the T protein. This is Glycine cleavage system H protein from Polynucleobacter necessarius subsp. necessarius (strain STIR1).